We begin with the raw amino-acid sequence, 330 residues long: UPF0353 protein MAP_3434 (330 aa).

2 consecutive transmembrane segments (helical) span residues G21–A41 and L63–T83. Residues V94–I289 form the VWFA domain. The chain crosses the membrane as a helical span at residues A304–I324.

The protein belongs to the UPF0353 family.

The protein localises to the cell membrane. This Mycolicibacterium paratuberculosis (strain ATCC BAA-968 / K-10) (Mycobacterium paratuberculosis) protein is UPF0353 protein MAP_3434.